Here is a 58-residue protein sequence, read N- to C-terminus: MEKRVCSFCGYDIEPGTGKMYVRRDGRVFYFCSGKCEKNMLKLKRKPRKLKWTKHYSR.

Residues Cys-6, Cys-9, Cys-32, and Cys-36 each coordinate Zn(2+). The C4-type zinc-finger motif lies at 6-36 (CSFCGYDIEPGTGKMYVRRDGRVFYFCSGKC).

Belongs to the eukaryotic ribosomal protein eL24 family. In terms of assembly, part of the 50S ribosomal subunit. Forms a cluster with proteins L3 and L14. The cofactor is Zn(2+).

Functionally, binds to the 23S rRNA. The protein is Large ribosomal subunit protein eL24 of Archaeoglobus fulgidus (strain ATCC 49558 / DSM 4304 / JCM 9628 / NBRC 100126 / VC-16).